A 295-amino-acid polypeptide reads, in one-letter code: Non-selective voltage-gated ion channel VDAC2 (295 aa).

Residues K24 and K32 each coordinate ATP. K32 carries the N6-acetyllysine; alternate modification. K32 carries the post-translational modification N6-succinyllysine; alternate. A Glycyl lysine isopeptide (Lys-Gly) (interchain with G-Cter in ubiquitin); alternate cross-link involves residue K32. The next 2 membrane-spanning stretches (beta stranded) occupy residues L38–T45 and V51–N60. A Glycyl lysine isopeptide (Lys-Gly) (interchain with G-Cter in ubiquitin) cross-link involves residue K65. The beta stranded transmembrane segment at V66–W76 threads the bilayer. At Y79 the chain carries Phosphotyrosine. Transmembrane regions (beta stranded) follow at residues L81–N88, T92–E100, and L107–S116. T119 carries the phosphothreonine modification. K121 is modified (N6-acetyllysine; alternate). K121 participates in a covalent cross-link: Glycyl lysine isopeptide (Lys-Gly) (interchain with G-Cter in ubiquitin); alternate. K122 participates in a covalent cross-link: Glycyl lysine isopeptide (Lys-Gly) (interchain with G-Cter in ubiquitin). The next 4 beta stranded transmembrane spans lie at K122–K131, I135–D144, P148–G157, and W161–D170. Residue K173 forms a Glycyl lysine isopeptide (Lys-Gly) (interchain with G-Cter in ubiquitin) linkage. 6 beta stranded membrane-spanning segments follow: residues T177 to T187, F190 to N197, E201 to V210, F214 to W222, T229 to Q238, and A243 to N250. S252 bears the Phosphoserine mark. Residues L254–G256 and S272–D276 each bind NAD(+). 2 beta stranded membrane passes run L254–L263 and V267–V275. K278 bears the N6-acetyllysine; alternate mark. K278 is covalently cross-linked (Glycyl lysine isopeptide (Lys-Gly) (interchain with G-Cter in ubiquitin); alternate). The chain crosses the membrane as a beta stranded span at residues H285 to A295.

Belongs to the eukaryotic mitochondrial porin family. Monomer, homodimer and higher order oligomers; formation of higher order structures is necessary for scramblase activity. Interacts with ARMC12 in a TBC1D21-dependent manner. Interacts with KLC3. Interacts with SPATA33. Interacts with PPP3CC in a SPATA33-dependent manner. In terms of processing, ubiquitinated by PRKN during mitophagy, leading to its degradation and enhancement of mitophagy. Deubiquitinated by USP30. Highest levels of expression detected in testis, less but still abundant expression in heart, kidney, brain, and skeletal muscle. Expressed in the sperm midpiece (at protein level).

It is found in the mitochondrion outer membrane. The protein localises to the membrane. The enzyme catalyses chloride(in) = chloride(out). The catalysed reaction is K(+)(in) = K(+)(out). It catalyses the reaction a 1,2-diacyl-sn-glycero-3-phospho-L-serine(in) = a 1,2-diacyl-sn-glycero-3-phospho-L-serine(out). It carries out the reaction a 1,2-diacyl-sn-glycero-3-phosphocholine(in) = a 1,2-diacyl-sn-glycero-3-phosphocholine(out). The enzyme catalyses a 1,2-diacyl-sn-glycero-3-phospho-(1D-myo-inositol)(in) = a 1,2-diacyl-sn-glycero-3-phospho-(1D-myo-inositol)(out). Functionally, non-selective voltage-gated ion channel that mediates the transport of anions and cations through the mitochondrion outer membrane and plasma membrane. The channel adopts an open conformation at zero mV and a closed conformation at both positive and negative potentials. There are two populations of channels; the main that functions in a lower open-state conductance with lower ion selectivity, that switch, in a voltage-dependent manner, from the open to a low-conducting 'closed' state and the other that has a normal ion selectivity in the typical high conductance, 'open' state. Binds various lipids, including the sphingolipid ceramide, the phospholipid phosphatidylcholine, and the sterols cholesterol and oxysterol. Binding of ceramide promotes the mitochondrial outer membrane permeabilization (MOMP) apoptotic pathway. Catalyzes the scrambling of phospholipids across the outer mitochondrial membrane; the mechanism is unrelated to channel activity and is capable of translocating both anionic and zwitterionic phospholipids. This chain is Non-selective voltage-gated ion channel VDAC2, found in Mus musculus (Mouse).